Consider the following 350-residue polypeptide: Spermidine/putrescine import ATP-binding protein PotA (350 aa).

The ABC transporter domain maps to 6–236 (LELRNVTKDY…PENLWVAKFI (231 aa)). 38–45 (GPSGCGKT) is a binding site for ATP.

It belongs to the ABC transporter superfamily. Spermidine/putrescine importer (TC 3.A.1.11.1) family. As to quaternary structure, the complex is composed of two ATP-binding proteins (PotA), two transmembrane proteins (PotB and PotC) and a solute-binding protein (PotD).

It localises to the cell membrane. The enzyme catalyses ATP + H2O + polyamine-[polyamine-binding protein]Side 1 = ADP + phosphate + polyamineSide 2 + [polyamine-binding protein]Side 1.. Part of the ABC transporter complex PotABCD involved in spermidine/putrescine import. Responsible for energy coupling to the transport system. The polypeptide is Spermidine/putrescine import ATP-binding protein PotA (Mesoplasma florum (strain ATCC 33453 / NBRC 100688 / NCTC 11704 / L1) (Acholeplasma florum)).